We begin with the raw amino-acid sequence, 61 residues long: Small ribosomal subunit protein uS14 (61 aa).

Zn(2+)-binding residues include Cys24, Cys27, Cys40, and Cys43.

It belongs to the universal ribosomal protein uS14 family. Zinc-binding uS14 subfamily. Part of the 30S ribosomal subunit. Contacts proteins S3 and S10. Requires Zn(2+) as cofactor.

Binds 16S rRNA, required for the assembly of 30S particles and may also be responsible for determining the conformation of the 16S rRNA at the A site. The chain is Small ribosomal subunit protein uS14 from Campylobacter lari (strain RM2100 / D67 / ATCC BAA-1060).